A 212-amino-acid polypeptide reads, in one-letter code: External core antigen (212 aa).

Positions 1–19 are cleaved as a signal peptide; it reads MQLFHLCLIISCSCPTVQA. Residues 25–27 are HBEAG; sequence GWL. Residues 172-212 form a disordered region; sequence LPETTVVRRRGRSPRRRTPSPRRRRSQSPRRRRSQSRESQC. The span at 178-205 shows a compositional bias: basic residues; the sequence is VRRRGRSPRRRTPSPRRRRSQSPRRRRS. A 1; half-length repeat occupies 184-190; sequence SPRRRTP. Positions 184-206 are 3 X 8 AA repeats of S-P-R-R-R-R-S-Q; sequence SPRRRTPSPRRRRSQSPRRRRSQ. The propeptide occupies 184–212; the sequence is SPRRRTPSPRRRRSQSPRRRRSQSRESQC. A run of 2 repeats spans residues 191-198 and 199-206.

This sequence belongs to the orthohepadnavirus precore antigen family. In terms of assembly, homodimerizes. Phosphorylated. In terms of processing, cleaved by host furin.

It is found in the secreted. The protein localises to the host nucleus. Its function is as follows. May regulate immune response to the intracellular capsid in acting as a T-cell tolerogen, by having an immunoregulatory effect which prevents destruction of infected cells by cytotoxic T-cells. This immune regulation may predispose to chronicity during perinatal infections and prevent severe liver injury during adult infections. This is External core antigen from Hepatitis B virus genotype D (isolate Germany/1-91/1991) (HBV-D).